Reading from the N-terminus, the 118-residue chain is UPF0134 protein MPN_287 (118 aa).

The protein belongs to the UPF0134 family.

This chain is UPF0134 protein MPN_287, found in Mycoplasma pneumoniae (strain ATCC 29342 / M129 / Subtype 1) (Mycoplasmoides pneumoniae).